The following is a 103-amino-acid chain: Small ribosomal subunit protein uS10 (103 aa).

The protein belongs to the universal ribosomal protein uS10 family. In terms of assembly, part of the 30S ribosomal subunit.

In terms of biological role, involved in the binding of tRNA to the ribosomes. The protein is Small ribosomal subunit protein uS10 of Xanthomonas axonopodis pv. citri (strain 306).